Reading from the N-terminus, the 141-residue chain is Nucleoside diphosphate kinase (141 aa).

ATP-binding residues include Lys-11, Phe-59, Arg-87, Thr-93, Arg-104, and Asn-114. The active-site Pros-phosphohistidine intermediate is the His-117.

The protein belongs to the NDK family. Homotetramer. Requires Mg(2+) as cofactor.

It is found in the cytoplasm. It carries out the reaction a 2'-deoxyribonucleoside 5'-diphosphate + ATP = a 2'-deoxyribonucleoside 5'-triphosphate + ADP. The catalysed reaction is a ribonucleoside 5'-diphosphate + ATP = a ribonucleoside 5'-triphosphate + ADP. Its function is as follows. Major role in the synthesis of nucleoside triphosphates other than ATP. The ATP gamma phosphate is transferred to the NDP beta phosphate via a ping-pong mechanism, using a phosphorylated active-site intermediate. The polypeptide is Nucleoside diphosphate kinase (Pseudomonas putida (strain GB-1)).